Reading from the N-terminus, the 427-residue chain is 3-phosphoshikimate 1-carboxyvinyltransferase (427 aa).

Residues Lys20, Ser21, and Arg25 each coordinate 3-phosphoshikimate. Residue Lys20 coordinates phosphoenolpyruvate. The phosphoenolpyruvate site is built by Gly92 and Arg120. 4 residues coordinate 3-phosphoshikimate: Ser166, Gln168, Asp312, and Lys339. Gln168 is a phosphoenolpyruvate binding site. Asp312 functions as the Proton acceptor in the catalytic mechanism. Phosphoenolpyruvate contacts are provided by Arg343 and Arg385.

It belongs to the EPSP synthase family. Monomer.

It is found in the cytoplasm. The enzyme catalyses 3-phosphoshikimate + phosphoenolpyruvate = 5-O-(1-carboxyvinyl)-3-phosphoshikimate + phosphate. The protein operates within metabolic intermediate biosynthesis; chorismate biosynthesis; chorismate from D-erythrose 4-phosphate and phosphoenolpyruvate: step 6/7. In terms of biological role, catalyzes the transfer of the enolpyruvyl moiety of phosphoenolpyruvate (PEP) to the 5-hydroxyl of shikimate-3-phosphate (S3P) to produce enolpyruvyl shikimate-3-phosphate and inorganic phosphate. The polypeptide is 3-phosphoshikimate 1-carboxyvinyltransferase (Streptococcus pneumoniae serotype 19F (strain G54)).